A 155-amino-acid chain; its full sequence is 6,7-dimethyl-8-ribityllumazine synthase (155 aa).

5-amino-6-(D-ribitylamino)uracil-binding positions include phenylalanine 18, 49-51, and 75-77; these read ALE and CVI. 80–81 provides a ligand contact to (2S)-2-hydroxy-3-oxobutyl phosphate; that stretch reads ET. The active-site Proton donor is the histidine 83. Asparagine 108 provides a ligand contact to 5-amino-6-(D-ribitylamino)uracil. Arginine 122 contributes to the (2S)-2-hydroxy-3-oxobutyl phosphate binding site.

This sequence belongs to the DMRL synthase family.

It carries out the reaction (2S)-2-hydroxy-3-oxobutyl phosphate + 5-amino-6-(D-ribitylamino)uracil = 6,7-dimethyl-8-(1-D-ribityl)lumazine + phosphate + 2 H2O + H(+). It functions in the pathway cofactor biosynthesis; riboflavin biosynthesis; riboflavin from 2-hydroxy-3-oxobutyl phosphate and 5-amino-6-(D-ribitylamino)uracil: step 1/2. Its function is as follows. Catalyzes the formation of 6,7-dimethyl-8-ribityllumazine by condensation of 5-amino-6-(D-ribitylamino)uracil with 3,4-dihydroxy-2-butanone 4-phosphate. This is the penultimate step in the biosynthesis of riboflavin. This is 6,7-dimethyl-8-ribityllumazine synthase from Bartonella henselae (strain ATCC 49882 / DSM 28221 / CCUG 30454 / Houston 1) (Rochalimaea henselae).